The sequence spans 456 residues: Protein disulfide-isomerase TMX3 (456 aa).

An N-terminal signal peptide occupies residues 1-29 (MANAVGRRSWAALRLCAAVILLDLAVCKG). Residues 30-131 (FVEDLNESFK…KDDIIEFAHR (102 aa)) enclose the Thioredoxin domain. At 30 to 378 (FVEDLNESFK…TIVSIFKSSP (349 aa)) the chain is on the lumenal side. The N-linked (GlcNAc...) asparagine glycan is linked to Asn35. Catalysis depends on nucleophile residues Cys56 and Cys59. Cys56 and Cys59 are oxidised to a cystine. 2 N-linked (GlcNAc...) asparagine glycosylation sites follow: Asn261 and Asn316. A helical transmembrane segment spans residues 379–399 (LMGCFLFGLPLGVISIMCYGI). Residues 400–456 (YTADTDGGYIEERYEVSKSEMENQEQIEESKEQESSSGGSLAPTVQEPKDVLEKKKD) are Cytoplasmic-facing. Residues 416 to 456 (SKSEMENQEQIEESKEQESSSGGSLAPTVQEPKDVLEKKKD) are disordered. Basic and acidic residues predominate over residues 446-456 (EPKDVLEKKKD). The Di-lysine motif motif lies at 453 to 456 (KKKD).

It belongs to the protein disulfide isomerase family.

The protein localises to the endoplasmic reticulum membrane. It carries out the reaction Catalyzes the rearrangement of -S-S- bonds in proteins.. Probable disulfide isomerase, which participates in the folding of proteins containing disulfide bonds. May act as a dithiol oxidase. Acts as a regulator of endoplasmic reticulum-mitochondria contact sites via its ability to regulate redox signals. The chain is Protein disulfide-isomerase TMX3 (Tmx3) from Mus musculus (Mouse).